The sequence spans 1099 residues: Adenylate-forming reductase Nps11 (1099 aa).

Residues Ala29 to Met360 form an adenylation (A) domain region. AMP-binding positions include His244, Asn347–Val348, Thr352, and Leu432–Arg435. A Carrier domain is found at Trp578–Val664. Residue Ser613 is modified to O-(pantetheine 4'-phosphoryl)serine. The segment at Leu717–Val952 is reductase (R) domain. Residues Thr721–Leu724, Asn809–Trp811, Tyr883, and Lys887 contribute to the NADP(+) site.

This sequence belongs to the adenylate-forming reductase family.

Adenylate-forming reductase, a natural product biosynthesis enzyme that resembles non-ribosomal peptide synthetases, yet serves to modify one substrate, rather than to condense two or more building blocks. The A-domain preferentially accepts benzoic acid as substrate. The natural product of the enzyme is not yet known. This chain is Adenylate-forming reductase Nps11, found in Serpula lacrymans var. lacrymans (strain S7.9) (Dry rot fungus).